A 187-amino-acid chain; its full sequence is MARSTARKRALNTLYEADEKNQDILSLLDERIAHPGAQTPLPDYAIEIVKGVAEHRRQIDMTLDEHSTGWKVRRMGVVDRNILRIAAWEILFNDDVPDKVAIDEALALAKTLCDDDSPAFIHGLLSAVCTAKNAAPAPESVAEEADEESSDSDAAASDPTDEGDVSDSSGASDEPAAPSAEIQPTVD.

Positions 135 to 187 (APAPESVAEEADEESSDSDAAASDPTDEGDVSDSSGASDEPAAPSAEIQPTVD) are disordered. Over residues 141 to 151 (VAEEADEESSD) the composition is skewed to acidic residues.

Belongs to the NusB family.

Its function is as follows. Involved in transcription antitermination. Required for transcription of ribosomal RNA (rRNA) genes. Binds specifically to the boxA antiterminator sequence of the ribosomal RNA (rrn) operons. The chain is Transcription antitermination protein NusB from Bifidobacterium longum subsp. infantis (strain ATCC 15697 / DSM 20088 / JCM 1222 / NCTC 11817 / S12).